The primary structure comprises 227 residues: Tegument protein ORF55 (227 aa).

Cysteine 11 carries the S-palmitoyl cysteine; by host lipid modification. The tract at residues 183–227 is disordered; that stretch reads VTRQPEATLPKPPTEDPSVSAMHSSIPPRPSSTLEETTESAIGST. Residues 213 to 227 are compositionally biased toward polar residues; it reads SSTLEETTESAIGST.

The protein belongs to the herpesviridae UL51 family. Oligomerizes. Interacts with ORF42; this interaction mediates ORF42 incorporation to virions. Interacts with vBCL2. In terms of processing, phosphorylated. Post-translationally, palmitoylation is necessary for Golgi localization.

It is found in the virion tegument. The protein resides in the host cytoplasm. The protein localises to the host Golgi apparatus. In terms of biological role, plays several roles during the time course of infection, including egress of virus particles from the perinuclear space and secondary envelopment of cytoplasmic capsids that bud into specific trans-Golgi network (TGN)-derived membranes. This chain is Tegument protein ORF55 (ORF55), found in Homo sapiens (Human).